We begin with the raw amino-acid sequence, 782 residues long: uncharacterized protein (782 aa).

The segment at residues 22 to 50 is a DNA-binding region (zn(2)-C6 fungal-type); that stretch reads CRECHRLKLKCDRVWPCENCKKRGIPNLC. 2 disordered regions span residues 105 to 126 and 645 to 665; these read GEKP…DPDH and VPSS…AEKA. Residues 654-665 are compositionally biased toward basic and acidic residues; that stretch reads SPDDSSMRAEKA.

It is found in the nucleus. This is an uncharacterized protein from Schizosaccharomyces pombe (strain 972 / ATCC 24843) (Fission yeast).